A 347-amino-acid chain; its full sequence is Toluene-4-sulfonate monooxygenase system iron-sulfur subunit TsaM1 (347 aa).

The 103-residue stretch at tryptophan 7–isoleucine 109 folds into the Rieske domain. Residues cysteine 48, histidine 50, cysteine 67, and histidine 70 each coordinate [2Fe-2S] cluster.

Homotetramer. Part of the p-toluenesulfonate methyl-monooxygenase complex TsaBM, comprising the reductase TsaB and the oxygenase TsaM. It depends on [2Fe-2S] cluster as a cofactor.

It catalyses the reaction toluene-4-sulfonate + NADH + O2 + H(+) = 4-(hydroxymethyl)benzenesulfonate + NAD(+) + H2O. Its function is as follows. Involved in the toluene-4-sulfonate degradation pathway. Does not discriminate between the sulfonate and the carboxyl substituents and can also be involved in the p-toluenecarboxylate degradation pathway. Can use toluene-4-sulfonate, p-toluate, m-toluate and 4-ethylbenzoate as substrates, but not p-xylene, toluene and p-cresol. Also catalyzes the demethylation of 4-methoxybenzoate to 4-hydroxybenzoate. The polypeptide is Toluene-4-sulfonate monooxygenase system iron-sulfur subunit TsaM1 (tsaM1) (Comamonas testosteroni (Pseudomonas testosteroni)).